The chain runs to 329 residues: DNA-directed RNA polymerase subunit alpha (329 aa).

The alpha N-terminal domain (alpha-NTD) stretch occupies residues 1 to 235 (MQGSVTEFLK…EQLDAFVDLR (235 aa)). The tract at residues 249–329 (FDPILLRPVD…NWPPASIAED (81 aa)) is alpha C-terminal domain (alpha-CTD).

It belongs to the RNA polymerase alpha chain family. Homodimer. The RNAP catalytic core consists of 2 alpha, 1 beta, 1 beta' and 1 omega subunit. When a sigma factor is associated with the core the holoenzyme is formed, which can initiate transcription.

It catalyses the reaction RNA(n) + a ribonucleoside 5'-triphosphate = RNA(n+1) + diphosphate. DNA-dependent RNA polymerase catalyzes the transcription of DNA into RNA using the four ribonucleoside triphosphates as substrates. The polypeptide is DNA-directed RNA polymerase subunit alpha (Actinobacillus pleuropneumoniae serotype 5b (strain L20)).